Reading from the N-terminus, the 250-residue chain is Pre-protein VI (250 aa).

Residues 1–33 (MEDINFASLAPRHGSRPFMGNWQDIGTSNMSGG) constitute a propeptide that is removed on maturation. The segment at 34 to 54 (AFSWGSLWSGIKNFGSTIKNY) is amphipathic alpha-helix essential for membrane lytic activity. Residues 36-53 (SWGSLWSGIKNFGSTIKN) are involved in endosomal membrane lysis. Residues 48–74 (GSTIKNYGSKAWNSSTGQMLRDKLKEQ) form an interaction with hexon protein region. Positions 67–76 (LRDKLKEQNF) match the Nuclear export signal motif. Residues 103–147 (INSKLDPRPPVEEPPPAVETVSPEGRGEKRPRPDREETLVTQIDE) are disordered. Position 124 is a phosphoserine; by host (serine 124). Residues 127–140 (GRGEKRPRPDREET) are compositionally biased toward basic and acidic residues. The Nuclear localization signal signature appears at 131–135 (KRPRP). Residue threonine 143 is modified to Phosphothreonine; by host. Positions 148–151 (PPSY) match the PPXY motif motif. Over residues 206–220 (PSRASLRRAASGPRS) the composition is skewed to low complexity. The segment at 206-226 (PSRASLRRAASGPRSMRPVAS) is disordered. A Nuclear export signal motif is present at residues 231–242 (STLNSIVGLGVQ). The interaction with hexon protein stretch occupies residues 233-239 (LNSIVGL). The binds to importin alpha/beta, involved in hexon nuclear import stretch occupies residues 240–250 (GVQSLKRRRCF). Residues 245 to 248 (KRRR) carry the Nuclear localization signal motif.

Belongs to the adenoviridae protein VI family. As to quaternary structure, interacts with hexon protein; this interaction allows nuclear import of hexon trimers and possibly pre-capsid assembly. Interacts (via C-terminal NLS) with importin alpha/beta. Interacts (via PPxY motif) with host NEDD4 ubiquitine ligase; this interaction might play a role in virus intracellular transport during entry. Part of a complex composed of the core-capsid bridging protein, the endosome lysis protein VI and the hexon-linking protein VIII; these interactions bridge the virus core to the capsid. Interacts with peripentonal hexons; this interaction stabilizes the capsid by gluing two peripentonal hexons together and joining them with an adjacent group-of-nine hexon. In terms of assembly, heterodimer with the viral protease; disulfide-linked. Interacts with the viral protease. Ubiquitinated by Nedd4 following partial capsid disassembly; which might play a role in intracellular virus movement during entry. In terms of processing, contains the major nuclear import and export signals. Proteolytically removed during virion maturation. The processing of the C-terminus turns the precursor into a mature viral structural protein and abrogates its ability to promote hexon import and act as a potential chaperone protein.

It localises to the host nucleus. The protein localises to the host cytoplasm. The protein resides in the virion. Functionally, during virus assembly, promotes hexon trimers nuclear import through nuclear pore complexes via an importin alpha/beta-dependent mechanism. By analogy to herpesviruses capsid assembly, might act as a chaperone to promote the formation of the icosahedral capsid. Structural component of the virion that provides increased stability to the particle shell through its interaction with the core-capsid bridging protein and the hexon-linking protein VIII. Fibers shedding during virus entry into host cell allows the endosome lysis protein to be exposed as a membrane-lytic peptide. Exhibits pH-independent membrane fragmentation activity and probably mediates viral rapid escape from host endosome via organellar membrane lysis. It is not clear if it then remains partially associated with the capsid and involved in the intracellular microtubule-dependent transport of capsid to the nucleus, or if it is lost during endosomal penetration. Its function is as follows. Cofactor that activates the viral protease. Binds to viral protease in a 1:1 ratio. The chain is Pre-protein VI from Human adenovirus C serotype 2 (HAdV-2).